The sequence spans 649 residues: 1-deoxy-D-xylulose-5-phosphate synthase 1 (649 aa).

Residues His73 and 113 to 115 contribute to the thiamine diphosphate site; that span reads SHA. Mg(2+) is bound at residue Asp144. Thiamine diphosphate is bound by residues 145-146, Asn174, Tyr285, and Glu367; that span reads GA. A Mg(2+)-binding site is contributed by Asn174. The disordered stretch occupies residues 623-649; the sequence is LLPGTGTRPGAQEYRPRMPLTDWSEPA.

This sequence belongs to the transketolase family. DXPS subfamily. As to quaternary structure, homodimer. The cofactor is Mg(2+). Thiamine diphosphate is required as a cofactor.

It carries out the reaction D-glyceraldehyde 3-phosphate + pyruvate + H(+) = 1-deoxy-D-xylulose 5-phosphate + CO2. The protein operates within metabolic intermediate biosynthesis; 1-deoxy-D-xylulose 5-phosphate biosynthesis; 1-deoxy-D-xylulose 5-phosphate from D-glyceraldehyde 3-phosphate and pyruvate: step 1/1. Catalyzes the acyloin condensation reaction between C atoms 2 and 3 of pyruvate and glyceraldehyde 3-phosphate to yield 1-deoxy-D-xylulose-5-phosphate (DXP). The sequence is that of 1-deoxy-D-xylulose-5-phosphate synthase 1 from Kitasatospora griseola (Streptomyces griseolosporeus).